We begin with the raw amino-acid sequence, 419 residues long: tRNA(Ile)-lysidine synthase (419 aa).

25–30 (SGGIDS) provides a ligand contact to ATP.

It belongs to the tRNA(Ile)-lysidine synthase family.

The protein localises to the cytoplasm. The catalysed reaction is cytidine(34) in tRNA(Ile2) + L-lysine + ATP = lysidine(34) in tRNA(Ile2) + AMP + diphosphate + H(+). Functionally, ligates lysine onto the cytidine present at position 34 of the AUA codon-specific tRNA(Ile) that contains the anticodon CAU, in an ATP-dependent manner. Cytidine is converted to lysidine, thus changing the amino acid specificity of the tRNA from methionine to isoleucine. In Actinobacillus pleuropneumoniae serotype 7 (strain AP76), this protein is tRNA(Ile)-lysidine synthase.